The primary structure comprises 794 residues: Protein argonaute-4 (794 aa).

A PAZ domain is found at 152–271 (PIIEFMCEVL…LPLEVCNIVA (120 aa)). Residues 442–753 (LIVVILPGKT…VAFRARYHLV (312 aa)) enclose the Piwi domain. The disordered stretch occupies residues 758–779 (DSAEGSHVSGQSNGRDPQALAK).

This sequence belongs to the argonaute family. Ago subfamily.

Its subcellular location is the cytoplasm. The protein resides in the P-body. Functionally, required for RNA-mediated gene silencing (RNAi). Binds to short RNAs such as microRNAs (miRNAs) and represses the translation of mRNAs which are complementary to them. Lacks endonuclease activity and does not appear to cleave target mRNAs. In Gallus gallus (Chicken), this protein is Protein argonaute-4 (AGO4).